A 729-amino-acid polypeptide reads, in one-letter code: Rab-like protein 6 (729 aa).

An N-acetylmethionine modification is found at Met1. The tract at residues 39-279 is small GTPase-like; the sequence is GVQYNMKIVI…IFLEMMEARS (241 aa). GTP is bound by residues 50-57, 100-104, and 177-179; these read GDRNTGKT, DVVDK, and YRD. The segment at 281–729 is disordered; that stretch reads GHASPLAANG…HPGGGDYEEL (449 aa). A compositionally biased stretch (low complexity) spans 290 to 315; sequence GQSPSPGSQSPVVPAGAVSTGSSSPG. Over residues 331–351 the composition is skewed to pro residues; the sequence is SSVPPVPPSEALPPPACPSAP. The span at 395–416 shows a compositional bias: basic and acidic residues; sequence PDDRLDRSFLEDTTPARDEKKV. Phosphoserine occurs at positions 402, 425, 427, 470, 471, 492, 525, and 577. Residues 489 to 502 show a composition bias toward polar residues; that stretch reads QQCSEPETKWSSIP. Over residues 581-595 the composition is skewed to basic and acidic residues; that stretch reads DTQRRADDFPVRDDP. Ser596 carries the phosphoserine modification. Positions 596–605 are enriched in acidic residues; it reads SDVTDEDEGP. Position 599 is a phosphothreonine (Thr599). The segment covering 606–615 has biased composition (pro residues); that stretch reads AEPPPPPKLP. The span at 635-652 shows a compositional bias: basic and acidic residues; the sequence is AGPKESSEEGKEGKTPSK. Phosphoserine is present on residues Ser640 and Ser641. The interaction with CDKN2A stretch occupies residues 655–693; that stretch reads KKKKKKGKEEEEKAAKKKSKHKKSKDKEEGKEERRRRQQ. Residues 669-678 are compositionally biased toward basic residues; it reads AKKKSKHKKS. Residues 679–689 show a composition bias toward basic and acidic residues; that stretch reads KDKEEGKEERR. Residues 711 to 729 are compositionally biased toward gly residues; the sequence is LGGGAPGGRHPGGGDYEEL.

It belongs to the small GTPase superfamily. Rab family. Post-translationally, isoform 1 is O-glycosylated, while other isoforms are not.

It is found in the cytoplasm. The protein localises to the nucleus. Its function is as follows. May enhance cellular proliferation. May reduce growth inhibitory activity of CDKN2A. In Homo sapiens (Human), this protein is Rab-like protein 6 (RABL6).